The primary structure comprises 924 residues: Hexokinase-3 (924 aa).

Residues 1–27 are disordered; the sequence is MAAIEPSGLHPGERDSSCPQEGIPRPS. 2 consecutive Hexokinase domains span residues 27-471 and 477-913; these read SGSL…MVTA and ATHR…LVTR. A hexokinase small subdomain 1 region spans residues 84–220; sequence HGTEQGDFLV…TYNIDVVAMV (137 aa). 95-102 contacts ATP; that stretch reads ELGATGAS. A D-glucose 6-phosphate-binding site is contributed by 95 to 104; the sequence is ELGATGASLR. D-glucose contacts are provided by residues Ser-168, 185 to 186, and 221 to 222; these read TK and ND. The interval 221-460 is hexokinase large subdomain 1; the sequence is NDTVGTMMGC…CDVSFIPSVD (240 aa). Asp-222 and Thr-245 together coordinate D-glucose 6-phosphate. D-glucose contacts are provided by residues Asn-248, Glu-273, and 304 to 307; that span reads QRFE. 426-428 contacts D-glucose 6-phosphate; it reads GGR. ATP contacts are provided by residues 438–439 and 542–547; these read CI and DLGGTN. The segment at 531–662 is hexokinase small subdomain 2; that stretch reads DGSERGDFLA…AVELNVVAIV (132 aa). 542-546 lines the D-glucose 6-phosphate pocket; the sequence is DLGGT. Residues 610–611, 627–628, and 663–664 contribute to the D-glucose site; these read SF, TK, and ND. The tract at residues 663-902 is hexokinase large subdomain 2; the sequence is NDTVGTMMSC…CTVTFLQSED (240 aa). D-glucose 6-phosphate-binding residues include Asp-664 and Thr-687. An ATP-binding site is contributed by Thr-687. D-glucose is bound by residues 689 to 690, Glu-715, and Glu-749; that span reads TN. ATP is bound by residues 754 to 755, 791 to 795, and 870 to 874; these read GM, TKFLS, and TLYKL. D-glucose 6-phosphate-binding positions include 868–870 and Ser-904; that span reads DGT.

The protein belongs to the hexokinase family.

It carries out the reaction a D-hexose + ATP = a D-hexose 6-phosphate + ADP + H(+). The catalysed reaction is D-fructose + ATP = D-fructose 6-phosphate + ADP + H(+). The enzyme catalyses D-glucose + ATP = D-glucose 6-phosphate + ADP + H(+). Its pathway is carbohydrate metabolism; hexose metabolism. The protein operates within carbohydrate degradation; glycolysis; D-glyceraldehyde 3-phosphate and glycerone phosphate from D-glucose: step 1/4. Its activity is regulated as follows. Hexokinase is an allosteric enzyme inhibited by its product D-glucose 6-phosphate. Catalyzes the phosphorylation of hexose, such as D-glucose and D-fructose, to hexose 6-phosphate (D-glucose 6-phosphate and D-fructose 6-phosphate, respectively). Mediates the initial step of glycolysis by catalyzing phosphorylation of D-glucose to D-glucose 6-phosphate. The chain is Hexokinase-3 from Rattus norvegicus (Rat).